Consider the following 818-residue polypeptide: uncharacterized protein (818 aa).

Low complexity-rich tracts occupy residues 1-33 (MYNN…NYIS), 44-68 (NNFL…PQQQ), and 97-150 (NNSN…TKSN). Disordered regions lie at residues 1 to 68 (MYNN…PQQQ), 92 to 150 (LNTG…TKSN), 164 to 220 (KLDN…KYHE), 284 to 306 (NMNG…NNSD), and 415 to 445 (NINK…NNNN). 2 stretches are compositionally biased toward acidic residues: residues 172 to 190 (SEEE…EEKE) and 205 to 214 (DNNSQDEDKE). The span at 284–302 (NMNGSSDSSDSSNSSGHSR) shows a compositional bias: low complexity. A helical transmembrane segment spans residues 534 to 554 (IIAIIVIVWPLIANLTYKFIV). Residues 779–808 (ANNFMSDSNRSPSSSSSSSSSTSDSENGML) are disordered. Positions 784-803 (SDSNRSPSSSSSSSSSTSDS) are enriched in low complexity.

The protein resides in the membrane. This is an uncharacterized protein from Dictyostelium discoideum (Social amoeba).